A 98-amino-acid chain; its full sequence is NADH-ubiquinone oxidoreductase chain 4L (98 aa).

Transmembrane regions (helical) follow at residues 2–22 (PSISINIILAFAAALLGMLMF), 28–48 (SSLLCLEGMMLSMFILSTLII), and 61–81 (IMLLVFSACEAAIGLALLVMV).

Belongs to the complex I subunit 4L family. Core subunit of respiratory chain NADH dehydrogenase (Complex I) which is composed of 45 different subunits.

It is found in the mitochondrion inner membrane. The catalysed reaction is a ubiquinone + NADH + 5 H(+)(in) = a ubiquinol + NAD(+) + 4 H(+)(out). Its function is as follows. Core subunit of the mitochondrial membrane respiratory chain NADH dehydrogenase (Complex I) which catalyzes electron transfer from NADH through the respiratory chain, using ubiquinone as an electron acceptor. Part of the enzyme membrane arm which is embedded in the lipid bilayer and involved in proton translocation. In Allocebus trichotis (Hairy-eared dwarf lemur), this protein is NADH-ubiquinone oxidoreductase chain 4L (MT-ND4L).